The following is a 1130-amino-acid chain: Alpha-mannosidase 2 (1130 aa).

Residues Met1–Arg14 lie on the Cytoplasmic side of the membrane. Residues Ile15–Ser35 form a helical; Signal-anchor for type II membrane protein membrane-spanning segment. Over Pro36–Phe1130 the chain is Lumenal. Asn117 is a glycosylation site (N-linked (GlcNAc...) asparagine). The Zn(2+) site is built by His133 and Asp135. Residue Asn166 is glycosylated (N-linked (GlcNAc...) asparagine). 2 residues coordinate Zn(2+): Asp247 and His527. Catalysis depends on Asp247, which acts as the Nucleophile. Residues Asn622, Asn683, Asn1056, and Asn1095 are each glycosylated (N-linked (GlcNAc...) asparagine).

The protein belongs to the glycosyl hydrolase 38 family. As to quaternary structure, homodimer; disulfide-linked. Requires Zn(2+) as cofactor. Post-translationally, N-glycosylated.

Its subcellular location is the microsome membrane. It localises to the golgi apparatus membrane. The catalysed reaction is N(4)-{beta-D-GlcNAc-(1-&gt;2)-alpha-D-Man-(1-&gt;3)-[alpha-D-Man-(1-&gt;3)-[alpha-D-Man-(1-&gt;6)]-alpha-D-Man-(1-&gt;6)]-beta-D-Man-(1-&gt;4)-beta-D-GlcNAc-(1-&gt;4)-beta-D-GlcNAc}-L-asparaginyl-[protein] + 2 H2O = 2 alpha-D-mannopyranose + an N(4)-{beta-D-GlcNAc-(1-&gt;2)-alpha-D-Man-(1-&gt;3)-[alpha-D-Man-(1-&gt;6)]-beta-D-Man-(1-&gt;4)-beta-D-GlcNAc-(1-&gt;4)-beta-D-GlcNAc}-L-asparaginyl-[protein]. Its pathway is protein modification; protein glycosylation. With respect to regulation, inhibited by swainsonine. Functionally, catalyzes the first committed step in the biosynthesis of complex N-glycans. It controls conversion of high mannose to complex N-glycans; the final hydrolytic step in the N-glycan maturation pathway. The sequence is that of Alpha-mannosidase 2 from Spodoptera frugiperda (Fall armyworm).